We begin with the raw amino-acid sequence, 169 residues long: 16S rRNA aminocarboxypropyltransferase (169 aa).

4 residues coordinate S-adenosyl-L-methionine: Thr15, Val65, Leu88, and Thr107.

This sequence belongs to the TDD superfamily. TSR3 family.

The protein localises to the cytoplasm. The catalysed reaction is an N(1)-methylpseudouridine in rRNA + S-adenosyl-L-methionine = N(1)-methyl-N(3)-[(3S)-3-amino-3-carboxypropyl]pseudouridine in rRNA + S-methyl-5'-thioadenosine + H(+). Its function is as follows. Aminocarboxypropyltransferase that catalyzes the aminocarboxypropyl transfer on pseudouridine corresponding to position 914 in M.jannaschii 16S rRNA. It constitutes the last step in biosynthesis of the hypermodified N1-methyl-N3-(3-amino-3-carboxypropyl) pseudouridine (m1acp3-Psi). This Methanopyrus kandleri (strain AV19 / DSM 6324 / JCM 9639 / NBRC 100938) protein is 16S rRNA aminocarboxypropyltransferase.